Here is a 446-residue protein sequence, read N- to C-terminus: MREIVHLQTGQCGNQIGAAFWQTISGEHGLDSNGVYNGTSELQLERMSVYFNEASGNKYVPRAVLVDLEPGTMDAVRAGPFGQLFRPDNFVFGQSGAGNNWAKGHYTEGAELVDQVLDVVRREAEGCDCLQGFQITHSLGGGTGAGMGTLLISKIREEFPDRMMATFSVVPSPKVSDTVVEPYNATLSVHQLVENSDETFCIDNEALYDICMRTLKLSNPSYGDLNYLVSAVMSGVTTCLRFPGQLNSDLRKLAVNMVPFPRLHFFMVGFAPLTSRGAHSFRAVSVPELTQQMFDPKNMMAASDFRNGRYLTCSAIFRGRVAMKEVEDQMRNVQSKNSSYFVEWIPNNIQTALCAIPPRGLTMSSTFIGNSTSIQELFKRVGEQFTAMFRRKAFLHWYTGEGMDEMEFTEAESNMNDLVSEYQQYQDAGIDEEEEEYEEELPEGEE.

Positions 11, 69, 138, 142, 143, 144, 204, and 226 each coordinate GTP. E69 serves as a coordination point for Mg(2+). Positions 422–446 (YQQYQDAGIDEEEEEYEEELPEGEE) are disordered. The segment covering 429-446 (GIDEEEEEYEEELPEGEE) has biased composition (acidic residues).

The protein belongs to the tubulin family. Dimer of alpha and beta chains. A typical microtubule is a hollow water-filled tube with an outer diameter of 25 nm and an inner diameter of 15 nM. Alpha-beta heterodimers associate head-to-tail to form protofilaments running lengthwise along the microtubule wall with the beta-tubulin subunit facing the microtubule plus end conferring a structural polarity. Microtubules usually have 13 protofilaments but different protofilament numbers can be found in some organisms and specialized cells. It depends on Mg(2+) as a cofactor.

It localises to the cytoplasm. Its subcellular location is the cytoskeleton. Functionally, tubulin is the major constituent of microtubules, a cylinder consisting of laterally associated linear protofilaments composed of alpha- and beta-tubulin heterodimers. Microtubules grow by the addition of GTP-tubulin dimers to the microtubule end, where a stabilizing cap forms. Below the cap, tubulin dimers are in GDP-bound state, owing to GTPase activity of alpha-tubulin. The sequence is that of Tubulin beta chain (TUB2) from Gibberella zeae (strain ATCC MYA-4620 / CBS 123657 / FGSC 9075 / NRRL 31084 / PH-1) (Wheat head blight fungus).